Consider the following 265-residue polypeptide: 4-diphosphocytidyl-2-C-methyl-D-erythritol kinase (265 aa).

K8 is a catalytic residue. 95–105 (PIGAGLGGGSS) is an ATP binding site. Residue D135 is part of the active site.

This sequence belongs to the GHMP kinase family. IspE subfamily.

The enzyme catalyses 4-CDP-2-C-methyl-D-erythritol + ATP = 4-CDP-2-C-methyl-D-erythritol 2-phosphate + ADP + H(+). Its pathway is isoprenoid biosynthesis; isopentenyl diphosphate biosynthesis via DXP pathway; isopentenyl diphosphate from 1-deoxy-D-xylulose 5-phosphate: step 3/6. In terms of biological role, catalyzes the phosphorylation of the position 2 hydroxy group of 4-diphosphocytidyl-2C-methyl-D-erythritol. The protein is 4-diphosphocytidyl-2-C-methyl-D-erythritol kinase of Ureaplasma urealyticum serovar 10 (strain ATCC 33699 / Western).